The following is a 72-amino-acid chain: uncharacterized protein (72 aa).

This is an uncharacterized protein from Homo sapiens (Human).